A 374-amino-acid polypeptide reads, in one-letter code: Glutamine synthetase (374 aa).

The tract at residues 2–25 (TTSASSHLNKGIKQVYMSLPQGEK) is required for glutamine-induced ubiquitination by CRL4(CRBN) and proteasomal degradation. 2 positions are modified to N6-acetyllysine: Lys11 and Lys14. Residues 24-106 (EKVQAMYIWI…VLCESFQVQF (83 aa)) enclose the GS beta-grasp domain. The GS catalytic domain occupies 114–374 (LRHTCKRIMD…TGDEPFQYKN (261 aa)). Residue Glu135 coordinates ATP. The Mn(2+) site is built by Glu135, Glu137, Glu197, and Glu204. An ATP-binding site is contributed by 204–209 (EFQIGP). 247–248 (NW) is an L-glutamate binding site. Residue His254 participates in Mn(2+) binding. Residues 256-258 (NFS), Arg320, and Arg325 each bind ATP. Arg320 serves as a coordination point for L-glutamate. 337–339 (YFE) is a binding site for ADP. Residue Glu339 participates in Mn(2+) binding. Arg341 is a binding site for L-glutamate. Ser344 bears the Phosphoserine mark.

The protein belongs to the glutamine synthetase family. In terms of assembly, decamer; composed of two pentamers. Interacts with PALMD. Interacts with RHOJ. Interacts with BEST2; this interaction tethers a fraction of GLUL to the membrane, causing a decrease of cytosolic glutamine synthase (GS) activity and inhibits the chloride channel activity of BEST2 by affecting the gating at the aperture in the absence of intracellular glutamate. Mg(2+) serves as cofactor. The cofactor is Mn(2+). Post-translationally, palmitoylated; undergoes autopalmitoylation. In terms of processing, acetylated by EP300/p300; acetylation is stimulated by increased glutamine levels and promotes ubiquitin-mediated proteasomal degradation. Ubiquitinated by ZNRF1. Ubiquitinated by the DCX (DDB1-CUL4-X-box) E3 ubiquitin-protein ligase complex called CRL4(CRBN), leading to proteasomal degradation.

It is found in the cytoplasm. Its subcellular location is the cytosol. The protein resides in the microsome. The protein localises to the mitochondrion. It localises to the cell membrane. It carries out the reaction L-glutamate + NH4(+) + ATP = L-glutamine + ADP + phosphate + H(+). The catalysed reaction is L-cysteinyl-[protein] + hexadecanoyl-CoA = S-hexadecanoyl-L-cysteinyl-[protein] + CoA. Its activity is regulated as follows. Glutamine synthetase activity is inhibited by methionine sulfoximine (MSO). Its function is as follows. Glutamine synthetase that catalyzes the ATP-dependent conversion of glutamate and ammonia to glutamine. Its role depends on tissue localization: in the brain, it regulates the levels of toxic ammonia and converts neurotoxic glutamate to harmless glutamine, whereas in the liver, it is one of the enzymes responsible for the removal of ammonia. Plays a key role in ammonium detoxification during erythropoiesis: the glutamine synthetase activity is required to remove ammonium generated by porphobilinogen deaminase (HMBS) during heme biosynthesis to prevent ammonium accumulation and oxidative stress. Essential for proliferation of fetal skin fibroblasts. Independently of its glutamine synthetase activity, required for endothelial cell migration during vascular development. Involved in angiogenesis by regulating membrane localization and activation of the GTPase RHOJ, possibly by promoting RHOJ palmitoylation. May act as a palmitoyltransferase for RHOJ: able to autopalmitoylate and then transfer the palmitoyl group to RHOJ. Plays a role in ribosomal 40S subunit biogenesis. Through the interaction with BEST2, inhibits BEST2 channel activity by affecting the gating at the aperture in the absence of intracellular L-glutamate, but sensitizes BEST2 to intracellular L-glutamate, which promotes the opening of BEST2 and thus relieves its inhibitory effect on BEST2. In Macaca fascicularis (Crab-eating macaque), this protein is Glutamine synthetase.